Consider the following 491-residue polypeptide: Acetyl-coenzyme A carboxylase carboxyl transferase subunit beta, chloroplastic (491 aa).

In terms of domain architecture, CoA carboxyltransferase N-terminal spans 224 to 491 (LWIQCENCYG…FFPLNPKKIK (268 aa)). Zn(2+)-binding residues include C228, C231, C247, and C250. The C4-type zinc-finger motif lies at 228–250 (CENCYGLNYKKNLKSKINICEQC).

The protein belongs to the AccD/PCCB family. In terms of assembly, acetyl-CoA carboxylase is a heterohexamer composed of biotin carboxyl carrier protein, biotin carboxylase and 2 subunits each of ACCase subunit alpha and ACCase plastid-coded subunit beta (accD). Zn(2+) serves as cofactor.

The protein resides in the plastid. It is found in the chloroplast stroma. It carries out the reaction N(6)-carboxybiotinyl-L-lysyl-[protein] + acetyl-CoA = N(6)-biotinyl-L-lysyl-[protein] + malonyl-CoA. The protein operates within lipid metabolism; malonyl-CoA biosynthesis; malonyl-CoA from acetyl-CoA: step 1/1. Functionally, component of the acetyl coenzyme A carboxylase (ACC) complex. Biotin carboxylase (BC) catalyzes the carboxylation of biotin on its carrier protein (BCCP) and then the CO(2) group is transferred by the transcarboxylase to acetyl-CoA to form malonyl-CoA. The polypeptide is Acetyl-coenzyme A carboxylase carboxyl transferase subunit beta, chloroplastic (Vitis vinifera (Grape)).